A 296-amino-acid polypeptide reads, in one-letter code: Ribose import binding protein RbsB (296 aa).

The signal sequence occupies residues 1–25; that stretch reads MNMKKLATLVSAVALSATVSANAMA.

The protein belongs to the bacterial solute-binding protein 2 family. In terms of assembly, the complex is composed of an ATP-binding protein (RbsA), two transmembrane proteins (RbsC) and a solute-binding protein (RbsB).

The protein resides in the periplasm. Part of the ABC transporter complex RbsABC involved in ribose import. Binds ribose. This chain is Ribose import binding protein RbsB (rbsB), found in Salmonella typhi.